A 343-amino-acid polypeptide reads, in one-letter code: Anthranilate phosphoribosyltransferase (343 aa).

5-phospho-alpha-D-ribose 1-diphosphate-binding positions include G84, 87–88 (GD), T92, 94–97 (NIST), 112–120 (KHGNRGVSS), and S124. Residue G84 participates in anthranilate binding. S96 lines the Mg(2+) pocket. N115 lines the anthranilate pocket. R170 contributes to the anthranilate binding site. 2 residues coordinate Mg(2+): D229 and E230.

It belongs to the anthranilate phosphoribosyltransferase family. Homodimer. It depends on Mg(2+) as a cofactor.

It catalyses the reaction N-(5-phospho-beta-D-ribosyl)anthranilate + diphosphate = 5-phospho-alpha-D-ribose 1-diphosphate + anthranilate. Its pathway is amino-acid biosynthesis; L-tryptophan biosynthesis; L-tryptophan from chorismate: step 2/5. Its function is as follows. Catalyzes the transfer of the phosphoribosyl group of 5-phosphorylribose-1-pyrophosphate (PRPP) to anthranilate to yield N-(5'-phosphoribosyl)-anthranilate (PRA). This Burkholderia thailandensis (strain ATCC 700388 / DSM 13276 / CCUG 48851 / CIP 106301 / E264) protein is Anthranilate phosphoribosyltransferase.